The chain runs to 471 residues: 7-dehydrocholesterol reductase (471 aa).

A run of 8 helical transmembrane segments spans residues Leu36–Ala56, Leu95–His115, Leu144–Phe164, Trp173–Ile193, Leu233–Ala253, Val262–Trp282, Leu302–Val322, and Gln327–Phe347. Residues Lys354, Arg358, Leu391, Trp396, and Asn403–Tyr404 each bind NADP(+). The chain crosses the membrane as a helical span at residues Leu416–Leu436. NADP(+)-binding positions include Asp443, Cys447 to Tyr451, and Tyr458.

Belongs to the ERG4/ERG24 family. In terms of assembly, interacts with DHCR24; this interaction regulates DHCR7 activity. Interacts with TMEM147. In terms of tissue distribution, highest expression is detected in liver, followed by kidney and brain.

Its subcellular location is the endoplasmic reticulum membrane. It catalyses the reaction cholesterol + NADP(+) = 7-dehydrocholesterol + NADPH + H(+). It carries out the reaction 7-dehydrodesmosterol + NADPH + H(+) = desmosterol + NADP(+). The enzyme catalyses 5,6alpha-epoxy-5alpha-cholestan-3beta-ol + H2O = 5alpha-cholestane-3beta,5,6beta-triol. The catalysed reaction is 5,6beta-epoxy-5beta-cholestan-3beta-ol + H2O = 5alpha-cholestane-3beta,5,6beta-triol. Its pathway is steroid biosynthesis; cholesterol biosynthesis. Functionally, oxidoreductase that catalyzes the last step of the cholesterol synthesis pathway, which transforms cholesta-5,7-dien-3beta-ol (7-dehydrocholesterol,7-DHC) into cholesterol by reducing the C7-C8 double bond of its sterol core. Can also metabolize cholesta-5,7,24-trien-3beta-ol (7-dehydrodemosterol, 7-DHD) to desmosterol, which is then metabolized by the Delta(24)-sterol reductase (DHCR24) to cholesterol. Modulates ferroptosis (a form of regulated cell death driven by iron-dependent lipid peroxidation) through the metabolic breakdown of the anti-ferroptotic metabolites 7-DHC and 7-DHD which, when accumulated, divert the propagation of peroxyl radical-mediated damage from phospholipid components to its sterol core, protecting plasma and mitochondrial membranes from phospholipid autoxidation. In terms of biological role, component of the microsomal antiestrogen binding site (AEBS), a multiproteic complex at the ER membrane that consists of an association between cholestenol Delta-isomerase/EBP and DHCR7. This complex is responsible for cholesterol-5,6-epoxide hydrolase (ChEH) activity, which consists in the hydration of cholesterol-5,6-epoxides (5,6-EC) into cholestane-3beta,5alpha,6beta-triol (CT). The precise role of each component of this complex has not been described yet. The sequence is that of 7-dehydrocholesterol reductase (Dhcr7) from Rattus norvegicus (Rat).